The sequence spans 342 residues: P2Y purinoceptor 12 (342 aa).

Topologically, residues 1–27 (MQAIDNLTSAPGNTSLCTRDYKITQVL) are extracellular. Residues Asn-6 and Asn-13 are each glycosylated (N-linked (GlcNAc...) asparagine). 2 disulfide bridges follow: Cys-17/Cys-270 and Cys-97/Cys-175. The helical transmembrane segment at 28–50 (FPLLYTVLFFVGLITNSLAMRIF) threads the bilayer. At 51-61 (FQIRSKSNFII) the chain is on the cytoplasmic side. 2 positions are modified to phosphoserine: Ser-55 and Ser-57. A helical transmembrane segment spans residues 62–82 (FLKNTVISDLLMILTFPFKIL). At 83–97 (SDAKLGAGPLRTFVC) the chain is on the extracellular side. Arg-93, Cys-97, and Tyr-105 together coordinate ADP. A helical transmembrane segment spans residues 98 to 118 (QVTSVIFYFTMYISISFLGLI). Residues 119–142 (TIDRYQKTTRPFKTSNPKNLLGAK) are Cytoplasmic-facing. Residues 143-162 (ILSVLIWAFMFLLSLPNMIL) form a helical membrane-spanning segment. Residues 156–159 (SLPN), 175–179 (CSFLK), His-187, and Asn-191 each bind ADP. The Extracellular portion of the chain corresponds to 163–185 (TNRRPRDKNVKKCSFLKSEFGLV). A helical transmembrane segment spans residues 186–207 (WHEIVNYICQVIFWINFLIVIV). The Cytoplasmic portion of the chain corresponds to 208–233 (CYTLITKELYRSYVRTRGVGKVPRKK). A helical membrane pass occupies residues 234-259 (VNVKVFIIIAVFFICFVPFHFARIPY). ADP-binding positions include 256 to 259 (RIPY), Gln-263, and Lys-280. At 260–278 (TLSQTRDVFDCAAENTLFY) the chain is on the extracellular side. A helical transmembrane segment spans residues 279-298 (VKESTLWLTSLNACLDPFIY). Residues 299-342 (FFLCKSFRNSLISMLKCPNSATSQSQDNRKKEQDGGDPNEETPM) are Cytoplasmic-facing. The tract at residues 317–342 (NSATSQSQDNRKKEQDGGDPNEETPM) is disordered. Residues 333–342 (GGDPNEETPM) are compositionally biased toward acidic residues.

The protein belongs to the G-protein coupled receptor 1 family.

The protein resides in the cell membrane. Functionally, receptor for ADP and ATP coupled to G-proteins that inhibit the adenylyl cyclase second messenger system. Required for normal platelet aggregation and blood coagulation. The protein is P2Y purinoceptor 12 (P2RY12) of Macaca fascicularis (Crab-eating macaque).